Reading from the N-terminus, the 156-residue chain is Small ribosomal subunit protein uS7 (156 aa).

This sequence belongs to the universal ribosomal protein uS7 family. As to quaternary structure, part of the 30S ribosomal subunit. Contacts proteins S9 and S11.

One of the primary rRNA binding proteins, it binds directly to 16S rRNA where it nucleates assembly of the head domain of the 30S subunit. Is located at the subunit interface close to the decoding center, probably blocks exit of the E-site tRNA. The protein is Small ribosomal subunit protein uS7 of Caldanaerobacter subterraneus subsp. tengcongensis (strain DSM 15242 / JCM 11007 / NBRC 100824 / MB4) (Thermoanaerobacter tengcongensis).